Reading from the N-terminus, the 127-residue chain is Small ribosomal subunit protein uS11 (127 aa).

This sequence belongs to the universal ribosomal protein uS11 family. Part of the 30S ribosomal subunit. Interacts with proteins S7 and S18. Binds to IF-3.

Functionally, located on the platform of the 30S subunit, it bridges several disparate RNA helices of the 16S rRNA. Forms part of the Shine-Dalgarno cleft in the 70S ribosome. This is Small ribosomal subunit protein uS11 from Rickettsia rickettsii (strain Iowa).